The following is a 377-amino-acid chain: UPF0754 membrane protein YheB (377 aa).

Helical transmembrane passes span 1 to 21 (MGIA…GAVT) and 357 to 377 (YLGG…VILF).

It belongs to the UPF0754 family.

It localises to the cell membrane. The polypeptide is UPF0754 membrane protein YheB (yheB) (Bacillus subtilis (strain 168)).